Here is a 262-residue protein sequence, read N- to C-terminus: 3-methyl-2-oxobutanoate hydroxymethyltransferase (262 aa).

Mg(2+) is bound by residues Asp-44 and Asp-83. Residues 44–45 (DS), Asp-83, and Lys-112 each bind 3-methyl-2-oxobutanoate. Glu-114 is a binding site for Mg(2+). The Proton acceptor role is filled by Glu-181.

It belongs to the PanB family. As to quaternary structure, homodecamer; pentamer of dimers. Mg(2+) serves as cofactor.

It is found in the cytoplasm. The enzyme catalyses 3-methyl-2-oxobutanoate + (6R)-5,10-methylene-5,6,7,8-tetrahydrofolate + H2O = 2-dehydropantoate + (6S)-5,6,7,8-tetrahydrofolate. It participates in cofactor biosynthesis; (R)-pantothenate biosynthesis; (R)-pantoate from 3-methyl-2-oxobutanoate: step 1/2. In terms of biological role, catalyzes the reversible reaction in which hydroxymethyl group from 5,10-methylenetetrahydrofolate is transferred onto alpha-ketoisovalerate to form ketopantoate. The chain is 3-methyl-2-oxobutanoate hydroxymethyltransferase from Thiobacillus denitrificans (strain ATCC 25259 / T1).